Here is a 666-residue protein sequence, read N- to C-terminus: Probable potassium transport system protein Kup (666 aa).

Helical transmembrane passes span 16 to 36 (GFII…LYTM), 58 to 78 (ISLI…LVAL), 99 to 119 (TPWL…DGAL), 141 to 161 (IFQN…LLFA), 167 to 187 (TGVI…FLGI), 221 to 241 (IFIL…YSDL), 253 to 273 (WPFV…WILA), 292 to 312 (FTMH…QALI), 343 to 363 (TYIP…VLLF), 373 to 393 (YGLA…FFLI), 402 to 422 (VLLM…ASAV), and 424 to 444 (FMHG…IMTI).

It belongs to the HAK/KUP transporter (TC 2.A.72) family.

It is found in the cell membrane. It carries out the reaction K(+)(in) + H(+)(in) = K(+)(out) + H(+)(out). In terms of biological role, transport of potassium into the cell. Likely operates as a K(+):H(+) symporter. This is Probable potassium transport system protein Kup from Streptococcus agalactiae serotype Ia (strain ATCC 27591 / A909 / CDC SS700).